Here is a 274-residue protein sequence, read N- to C-terminus: MTDISFTTSLPAGPAPGAIVQPEGPAKVTVRDLNFYYGDNRALKDINLNLAANRVTAFIGPSGCGKSTLLRIFNRMYDLYPGQRAEGQVMLDGHNILDPKLDLNLLRARVGMVFQKPTPFPMTIYENIAFGIRLYEKISKSEMDGRVEKALRGGALWNEVKDKLSASGLSLSGGQQQRLCIARTIAVRPEVILFDEPCSALDPISTAKIEELIDELKEEYTIAIVTHNMQQAARVSESTAFMYLGELIEFGPTDKIFTSPNDRRTQDYITGRFG.

The region spanning valine 28–isoleucine 269 is the ABC transporter domain. Glycine 60–serine 67 lines the ATP pocket.

It belongs to the ABC transporter superfamily. Phosphate importer (TC 3.A.1.7) family. The complex is composed of two ATP-binding proteins (PstB), two transmembrane proteins (PstC and PstA) and a solute-binding protein (PstS).

It is found in the cell inner membrane. The enzyme catalyses phosphate(out) + ATP + H2O = ADP + 2 phosphate(in) + H(+). Part of the ABC transporter complex PstSACB involved in phosphate import. Responsible for energy coupling to the transport system. The protein is Phosphate import ATP-binding protein PstB of Rhodopseudomonas palustris (strain HaA2).